A 63-amino-acid chain; its full sequence is uncharacterized protein (63 aa).

A helical membrane pass occupies residues 38–58 (ISLFIILHLCLLVCLLLSFYF).

The protein resides in the membrane. This is an uncharacterized protein from Saccharomyces cerevisiae (strain ATCC 204508 / S288c) (Baker's yeast).